The sequence spans 304 residues: D-tagatose-1-phosphate kinase (304 aa).

D250 acts as the Proton acceptor in catalysis.

It belongs to the carbohydrate kinase PfkB family. Mg(2+) serves as cofactor.

The catalysed reaction is alpha-D-tagatopyranose 1-phosphate + ATP = D-tagatofuranose 1,6-bisphosphate + ADP + H(+). Its pathway is carbohydrate degradation. In terms of biological role, kinase involved in a D-tagatose catabolic pathway. Catalyzes the phosphorylation of D-tagatose-1-phosphate (Tag-1P) to D-tagatose-1,6-bisphosphate. This is D-tagatose-1-phosphate kinase from Klebsiella oxytoca.